Consider the following 164-residue polypeptide: Protein SprT (164 aa).

The SprT-like domain occupies 14–156; the sequence is QQAETFFKRP…LCKRCRAILV (143 aa). Residue His69 participates in Zn(2+) binding. The active site involves Glu70. Zn(2+) is bound at residue His73.

It belongs to the SprT family. It depends on Zn(2+) as a cofactor.

It localises to the cytoplasm. The polypeptide is Protein SprT (Pseudomonas putida (strain GB-1)).